The chain runs to 195 residues: N-(5'-phosphoribosyl)anthranilate isomerase (195 aa).

This sequence belongs to the TrpF family.

The catalysed reaction is N-(5-phospho-beta-D-ribosyl)anthranilate = 1-(2-carboxyphenylamino)-1-deoxy-D-ribulose 5-phosphate. It participates in amino-acid biosynthesis; L-tryptophan biosynthesis; L-tryptophan from chorismate: step 3/5. The protein is N-(5'-phosphoribosyl)anthranilate isomerase of Streptococcus gordonii (strain Challis / ATCC 35105 / BCRC 15272 / CH1 / DL1 / V288).